Here is a 439-residue protein sequence, read N- to C-terminus: Xaa-Pro dipeptidase (439 aa).

Residues Asp-244, Asp-255, His-335, Glu-380, and Glu-419 each contribute to the Mn(2+) site.

It belongs to the peptidase M24B family. Bacterial-type prolidase subfamily. Requires Mn(2+) as cofactor.

The enzyme catalyses Xaa-L-Pro dipeptide + H2O = an L-alpha-amino acid + L-proline. Its function is as follows. Splits dipeptides with a prolyl residue in the C-terminal position. The chain is Xaa-Pro dipeptidase from Shewanella sp. (strain MR-4).